The sequence spans 134 residues: Large ribosomal subunit protein uL16 (134 aa).

Basic residues predominate over residues 1-20; it reads MLLQPKRTKFRKMHKGRNRG. The segment at 1–21 is disordered; the sequence is MLLQPKRTKFRKMHKGRNRGT.

It belongs to the universal ribosomal protein uL16 family. In terms of assembly, part of the 50S ribosomal subunit.

Functionally, binds 23S rRNA and is also seen to make contacts with the A and possibly P site tRNAs. The sequence is that of Large ribosomal subunit protein uL16 from Blochmanniella pennsylvanica (strain BPEN).